Consider the following 979-residue polypeptide: Putative disease resistance protein RGA1 (979 aa).

In terms of domain architecture, NB-ARC spans 143 to 437; sequence GSVLTEPQVY…MAHGFLLSKG (295 aa). 182 to 189 serves as a coordination point for ATP; sequence GMGGLGKT. LRR repeat units lie at residues 524-547, 549-570, 571-594, 595-619, 637-661, 748-773, 823-841, 842-866, 868-890, 891-915, 917-939, and 940-965; these read FVSLRVLNLRNSNLNQLPSSIGDL, HLRYLDLSGNFRIRNLPKRLCK, LQNLQTLDLHYCDSLSCLPKQTSK, LGSLRNLLLDGCSLTSTPPRIGLLT, LGELKNLNLYGSISITKLDRVKKDT, LPCLESLELHTGSADVEYVEDNVHPG, VKTLKVIVTDATVLRSISN, LRALTSLDISDNVEATSLPEEMFKS, ANLKYLKISFFRNLKELPTSLAS, LNALKSLKFEFCDALESLPEEGVKG, TSLTELSVSNCMMLKCLPEGLQH, and LTALTTLTITQCPIVFKRCERGIGED.

It belongs to the disease resistance NB-LRR family.

Its function is as follows. Disease resistance protein. Resistance proteins guard the plant against pathogens that contain an appropriate avirulence protein via a direct or indirect interaction with this avirulence protein. That triggers a defense system which restricts the pathogen growth. The protein is Putative disease resistance protein RGA1 (RGA1) of Solanum bulbocastanum (Wild potato).